A 500-amino-acid chain; its full sequence is Palmitoleoyl-protein carboxylesterase notum1a (500 aa).

Positions 1-26 are cleaved as a signal peptide; it reads MKRSLWVMQVLHWAVMLALVQCGALG. The N-linked (GlcNAc...) asparagine glycan is linked to N101. Residues S237, D344, and H393 each act as charge relay system in the active site.

Belongs to the pectinacetylesterase family. Notum subfamily.

It localises to the secreted. The enzyme catalyses [Wnt protein]-O-(9Z)-hexadecenoyl-L-serine + H2O = [Wnt protein]-L-serine + (9Z)-hexadecenoate + H(+). Functionally, carboxylesterase that acts as a key negative regulator of the Wnt signaling pathway. Acts by specifically mediating depalmitoleoylation of WNT proteins. Serine palmitoleoylation of WNT proteins is required for efficient binding to frizzled receptors. This chain is Palmitoleoyl-protein carboxylesterase notum1a, found in Danio rerio (Zebrafish).